The primary structure comprises 459 residues: Ribosomal protein uS12 methylthiotransferase RimO (459 aa).

Residues 1 to 28 (MSTNPPDLRPDLAPKARLTQPDRPGQPT) form a disordered region. The region spanning 27-137 (PTIGMVSLGC…VLDAVHAAVP (111 aa)) is the MTTase N-terminal domain. Residues cysteine 36, cysteine 72, cysteine 101, cysteine 168, cysteine 172, and cysteine 175 each contribute to the [4Fe-4S] cluster site. The region spanning 154–387 (LTPRHFSYLK…MAKSQDISEA (234 aa)) is the Radical SAM core domain. In terms of domain architecture, TRAM spans 390-457 (AAKVAQRLEV…EYDLWGRLAP (68 aa)).

Belongs to the methylthiotransferase family. RimO subfamily. Requires [4Fe-4S] cluster as cofactor.

It is found in the cytoplasm. The catalysed reaction is L-aspartate(89)-[ribosomal protein uS12]-hydrogen + (sulfur carrier)-SH + AH2 + 2 S-adenosyl-L-methionine = 3-methylsulfanyl-L-aspartate(89)-[ribosomal protein uS12]-hydrogen + (sulfur carrier)-H + 5'-deoxyadenosine + L-methionine + A + S-adenosyl-L-homocysteine + 2 H(+). Its function is as follows. Catalyzes the methylthiolation of an aspartic acid residue of ribosomal protein uS12. The protein is Ribosomal protein uS12 methylthiotransferase RimO of Roseobacter denitrificans (strain ATCC 33942 / OCh 114) (Erythrobacter sp. (strain OCh 114)).